The chain runs to 272 residues: Sulfate transporter CysZ (272 aa).

A run of 4 helical transmembrane segments spans residues 29–49 (FVII…WLFI), 66–86 (WLSF…LLLF), 148–168 (IIAL…VPVL), and 219–239 (FVPV…TLMW).

It belongs to the CysZ family.

Its subcellular location is the cell inner membrane. Its function is as follows. High affinity, high specificity proton-dependent sulfate transporter, which mediates sulfate uptake. Provides the sulfur source for the cysteine synthesis pathway. The polypeptide is Sulfate transporter CysZ (Haemophilus influenzae (strain 86-028NP)).